Reading from the N-terminus, the 212-residue chain is External core antigen (212 aa).

An N-terminal signal peptide occupies residues 1 to 19 (MQLFHLCLIISCSCPTVQA). An HBEAG region spans residues 25 to 27 (GWL). Residues 172–212 (LPETTVVRRRGRSPRRRTPSPRRRRSKSPRRRRSQSRESQC) are disordered. Residues 178-205 (VRRRGRSPRRRTPSPRRRRSKSPRRRRS) are compositionally biased toward basic residues. A 1; half-length repeat occupies 184 to 189 (SPRRRT). A 3 X 7 AA repeats of S-P-R-R-R-R-S region spans residues 184 to 205 (SPRRRTPSPRRRRSKSPRRRRS). Residues 184 to 212 (SPRRRTPSPRRRRSKSPRRRRSQSRESQC) constitute a propeptide that is removed on maturation. Tandem repeats lie at residues 191-197 (SPRRRRS) and 199-205 (SPRRRRS).

This sequence belongs to the orthohepadnavirus precore antigen family. As to quaternary structure, homodimerizes. In terms of processing, phosphorylated. Cleaved by host furin.

It localises to the secreted. Its subcellular location is the host nucleus. Functionally, may regulate immune response to the intracellular capsid in acting as a T-cell tolerogen, by having an immunoregulatory effect which prevents destruction of infected cells by cytotoxic T-cells. This immune regulation may predispose to chronicity during perinatal infections and prevent severe liver injury during adult infections. The protein is External core antigen of Hepatitis B virus genotype C subtype adr (isolate Japan/Nishioka/1983) (HBV-C).